Here is a 349-residue protein sequence, read N- to C-terminus: MSEKKDVRILAYESSCDETSTAVIKNGREIESLIVATQIKSHQRFGGVVPEVASRHHIEVVSQITKEALNEANCSWKDIDAIAVTYGPGLVGALLIGVSAAKAVSMATGIPLIGVDHIMGHIMAAQLKDEIEYPAIALQVSGGHTEIVLLKDPTHFEIIGDTRDDAAGEAYDKIGRVLGVNYPAGKTIDAWAHQGKDTFNFPRAMLEDDDYDFSFSGLKSAFINTCHHADQIHEKLNKYDLAASFQAAVIDVLAHKTIRAIKEYKPKTFIMGGGVAANQGLRDRMSEEIAKLPKADQPKVILPDLKLCGDNAAMIGAAAYNLYNGGQFADLTLNADPSLELPYAKSMLN.

Fe cation is bound by residues H117 and H121. Substrate-binding positions include 139-143 (QVSGG), D172, G185, D189, and N278. A Fe cation-binding site is contributed by D310.

It belongs to the KAE1 / TsaD family. The cofactor is Fe(2+).

It is found in the cytoplasm. It catalyses the reaction L-threonylcarbamoyladenylate + adenosine(37) in tRNA = N(6)-L-threonylcarbamoyladenosine(37) in tRNA + AMP + H(+). Required for the formation of a threonylcarbamoyl group on adenosine at position 37 (t(6)A37) in tRNAs that read codons beginning with adenine. Is involved in the transfer of the threonylcarbamoyl moiety of threonylcarbamoyl-AMP (TC-AMP) to the N6 group of A37, together with TsaE and TsaB. TsaD likely plays a direct catalytic role in this reaction. This chain is tRNA N6-adenosine threonylcarbamoyltransferase, found in Lactobacillus acidophilus (strain ATCC 700396 / NCK56 / N2 / NCFM).